We begin with the raw amino-acid sequence, 432 residues long: tRNA(Ile)-lysidine synthase (432 aa).

An ATP-binding site is contributed by 19–24; that stretch reads STGIDS.

Belongs to the tRNA(Ile)-lysidine synthase family.

It is found in the cytoplasm. It carries out the reaction cytidine(34) in tRNA(Ile2) + L-lysine + ATP = lysidine(34) in tRNA(Ile2) + AMP + diphosphate + H(+). Its function is as follows. Ligates lysine onto the cytidine present at position 34 of the AUA codon-specific tRNA(Ile) that contains the anticodon CAU, in an ATP-dependent manner. Cytidine is converted to lysidine, thus changing the amino acid specificity of the tRNA from methionine to isoleucine. This Staphylococcus epidermidis (strain ATCC 35984 / DSM 28319 / BCRC 17069 / CCUG 31568 / BM 3577 / RP62A) protein is tRNA(Ile)-lysidine synthase.